A 51-amino-acid chain; its full sequence is Large ribosomal subunit protein eL39 (51 aa).

Positions 32–51 (KRRVTRSPARRHWRRQKLKA) are disordered.

The protein belongs to the eukaryotic ribosomal protein eL39 family.

This is Large ribosomal subunit protein eL39 from Pyrobaculum calidifontis (strain DSM 21063 / JCM 11548 / VA1).